The primary structure comprises 231 residues: UPF0173 metal-dependent hydrolase AF_1265 (231 aa).

Belongs to the UPF0173 family.

The chain is UPF0173 metal-dependent hydrolase AF_1265 from Archaeoglobus fulgidus (strain ATCC 49558 / DSM 4304 / JCM 9628 / NBRC 100126 / VC-16).